The chain runs to 830 residues: Protein PAM1 (830 aa).

Residues L379–L400 adopt a coiled-coil conformation. Disordered regions lie at residues D426–L488, A513–Q558, N648–I699, and S727–K757. The span at P433 to D444 shows a compositional bias: polar residues. A coiled-coil region spans residues L481–L514. 2 stretches are compositionally biased toward low complexity: residues A513–Q527 and S538–S555. Over residues N651–I699 the composition is skewed to polar residues. A phosphoserine mark is found at S659 and S732. Low complexity predominate over residues Q738–N753. Residue S767 is modified to Phosphoserine. The segment covering A796–G806 has biased composition (polar residues). The interval A796 to K830 is disordered. Residues D807 to E816 show a composition bias toward basic and acidic residues. Positions K817–K830 are enriched in basic residues.

Belongs to the PAM1/SVL3 family.

In terms of biological role, not known. It is a suppressor of protein phosphatase 2A depletion. The protein is Protein PAM1 (PAM1) of Saccharomyces cerevisiae (strain ATCC 204508 / S288c) (Baker's yeast).